The sequence spans 361 residues: MAGNSIGQFFRVTTFGESHGLALGCIVDGVPPGIAITEADLQVDLDRRRPGTSRYTTQRREPDQVRILSGVFEGVTTGTSIGLLIENTDQRSQDYSAIKDVFRPGHADYTYEQKYGIRDYRGGGRSSARETAMRVAAGAIAKKYLLDKYGIRVRACLTQMGNIHCQLKDWELVEQNPFFSPDETKLEQLDALMRELKKAGDSIGAKVTVVAENVPAGLGEPVFDRLDADIAHALMSINAVKGVEIGDGFGVINLRGSENRDEITARGFTSNHAGGILGGISSSQPIVAHIALKPTSSIMVPGKTINRQGEEVEMVTRGRHDPCVGIRAVPIAEAMMAIVLMDHLLRQRAQCADVESSLPRW.

The NADP(+) site is built by R48 and R54. Residues 125-127 (RSS), 238-239 (NA), G278, 293-297 (KPTSS), and R319 each bind FMN.

It belongs to the chorismate synthase family. Homotetramer. The cofactor is FMNH2.

The enzyme catalyses 5-O-(1-carboxyvinyl)-3-phosphoshikimate = chorismate + phosphate. It functions in the pathway metabolic intermediate biosynthesis; chorismate biosynthesis; chorismate from D-erythrose 4-phosphate and phosphoenolpyruvate: step 7/7. Its function is as follows. Catalyzes the anti-1,4-elimination of the C-3 phosphate and the C-6 proR hydrogen from 5-enolpyruvylshikimate-3-phosphate (EPSP) to yield chorismate, which is the branch point compound that serves as the starting substrate for the three terminal pathways of aromatic amino acid biosynthesis. This reaction introduces a second double bond into the aromatic ring system. In Photorhabdus laumondii subsp. laumondii (strain DSM 15139 / CIP 105565 / TT01) (Photorhabdus luminescens subsp. laumondii), this protein is Chorismate synthase.